We begin with the raw amino-acid sequence, 123 residues long: D-ribose pyranase (123 aa).

His-20 acts as the Proton donor in catalysis. Residues Asp-28, His-90, and Tyr-112–Asn-114 each bind substrate.

Belongs to the RbsD / FucU family. RbsD subfamily. In terms of assembly, homodecamer.

The protein resides in the cytoplasm. It catalyses the reaction beta-D-ribopyranose = beta-D-ribofuranose. It functions in the pathway carbohydrate metabolism; D-ribose degradation; D-ribose 5-phosphate from beta-D-ribopyranose: step 1/2. Its function is as follows. Catalyzes the interconversion of beta-pyran and beta-furan forms of D-ribose. The sequence is that of D-ribose pyranase from Corynebacterium glutamicum (strain ATCC 13032 / DSM 20300 / JCM 1318 / BCRC 11384 / CCUG 27702 / LMG 3730 / NBRC 12168 / NCIMB 10025 / NRRL B-2784 / 534).